Reading from the N-terminus, the 228-residue chain is Carboxylesterase SOBER1 (228 aa).

Residues Ser106, Asp160, and His192 each act as charge relay system in the active site.

The protein belongs to the AB hydrolase superfamily. AB hydrolase 2 family.

Functionally, possesses carboxylesterase activity in vitro with a preference for short acyl chain substrates. Functions as a negative regulator of the hypersensitive response (HR) triggered by the bacterial type III effector protein AvrBsT. Possesses phospholipase A2 (PLA2) activity and hydrolyzes phosphatidylcholine (PC), a lipid that is hydrolyzed by phospholipase D (PLD) to produce phosphatidic acid (PA). Required to suppress AvrBsT-dependent HR and PLD-dependent production of PA in response to AvrBsT elicitation. The sequence is that of Carboxylesterase SOBER1 from Arabidopsis thaliana (Mouse-ear cress).